A 347-amino-acid chain; its full sequence is Olfactory receptor 13C3 (347 aa).

Residues 1-55 (MIVQLICTVCFLAVNTFHVRSSFDFLKADDMGEINQTLVSEFLLLGLSGYPKIEI) lie on the Extracellular side of the membrane. Residue Asn-35 is glycosylated (N-linked (GlcNAc...) asparagine). The helical transmembrane segment at 56–76 (VYFALILVMYLVILIGNGVLI) threads the bilayer. The Cytoplasmic segment spans residues 77–84 (IASIFDSH). A helical membrane pass occupies residues 85–105 (FHTPMYFFLGNLSFLDICYTS). The Extracellular segment spans residues 106–129 (SSVPSTLVSLISKKRNISFSGCAV). An intrachain disulfide couples Cys-127 to Cys-219. The helical transmembrane segment at 130 to 150 (QMFFGFAMGSTECLLLGMMAF) threads the bilayer. Over 151–169 (DRYVAICNPLRYPIILSKV) the chain is Cytoplasmic. A helical membrane pass occupies residues 170–190 (AYVLMASVSWLSGGINSAVQT). At 191-227 (LLAMRLPFCGNNIINHFACEILAVLKLACADISLNII) the chain is on the extracellular side. Residues 228–247 (TMVISNMAFLVLPLMVIFFS) form a helical membrane-spanning segment. Residues 248-267 (YMFILYTILQMNSATGRRKA) lie on the Cytoplasmic side of the membrane. The chain crosses the membrane as a helical span at residues 268-288 (FSTCSAHLTVVIIFYGTIFFM). Over 289–307 (YAKPKSQDLIGEEKLQALD) the chain is Extracellular. The chain crosses the membrane as a helical span at residues 308-328 (KLISLFYGVVTPMLNPILYSL). The Cytoplasmic portion of the chain corresponds to 329-347 (RNKDVKAAVKYLLNKKPIH).

It belongs to the G-protein coupled receptor 1 family.

The protein localises to the cell membrane. In terms of biological role, odorant receptor. The protein is Olfactory receptor 13C3 (OR13C3) of Homo sapiens (Human).